We begin with the raw amino-acid sequence, 100 residues long: Putative pterin-4-alpha-carbinolamine dehydratase (100 aa).

Belongs to the pterin-4-alpha-carbinolamine dehydratase family.

The catalysed reaction is (4aS,6R)-4a-hydroxy-L-erythro-5,6,7,8-tetrahydrobiopterin = (6R)-L-erythro-6,7-dihydrobiopterin + H2O. The chain is Putative pterin-4-alpha-carbinolamine dehydratase from Allorhizobium ampelinum (strain ATCC BAA-846 / DSM 112012 / S4) (Agrobacterium vitis (strain S4)).